Here is a 121-residue protein sequence, read N- to C-terminus: Large ribosomal subunit protein eL34A (121 aa).

It belongs to the eukaryotic ribosomal protein eL34 family. Component of the large ribosomal subunit (LSU). Mature yeast ribosomes consist of a small (40S) and a large (60S) subunit. The 40S small subunit contains 1 molecule of ribosomal RNA (18S rRNA) and 33 different proteins (encoded by 57 genes). The large 60S subunit contains 3 rRNA molecules (25S, 5.8S and 5S rRNA) and 46 different proteins (encoded by 81 genes).

The protein resides in the cytoplasm. Its function is as follows. Component of the ribosome, a large ribonucleoprotein complex responsible for the synthesis of proteins in the cell. The small ribosomal subunit (SSU) binds messenger RNAs (mRNAs) and translates the encoded message by selecting cognate aminoacyl-transfer RNA (tRNA) molecules. The large subunit (LSU) contains the ribosomal catalytic site termed the peptidyl transferase center (PTC), which catalyzes the formation of peptide bonds, thereby polymerizing the amino acids delivered by tRNAs into a polypeptide chain. The nascent polypeptides leave the ribosome through a tunnel in the LSU and interact with protein factors that function in enzymatic processing, targeting, and the membrane insertion of nascent chains at the exit of the ribosomal tunnel. The polypeptide is Large ribosomal subunit protein eL34A (Saccharomyces cerevisiae (strain ATCC 204508 / S288c) (Baker's yeast)).